Consider the following 474-residue polypeptide: ATP synthase subunit beta (474 aa).

ATP is bound at residue 155–162 (GGAGVGKT).

It belongs to the ATPase alpha/beta chains family. F-type ATPases have 2 components, CF(1) - the catalytic core - and CF(0) - the membrane proton channel. CF(1) has five subunits: alpha(3), beta(3), gamma(1), delta(1), epsilon(1). CF(0) has three main subunits: a(1), b(2) and c(9-12). The alpha and beta chains form an alternating ring which encloses part of the gamma chain. CF(1) is attached to CF(0) by a central stalk formed by the gamma and epsilon chains, while a peripheral stalk is formed by the delta and b chains.

It localises to the cell inner membrane. The catalysed reaction is ATP + H2O + 4 H(+)(in) = ADP + phosphate + 5 H(+)(out). In terms of biological role, produces ATP from ADP in the presence of a proton gradient across the membrane. The catalytic sites are hosted primarily by the beta subunits. The chain is ATP synthase subunit beta from Sorangium cellulosum (strain So ce56) (Polyangium cellulosum (strain So ce56)).